A 163-amino-acid polypeptide reads, in one-letter code: NADH-quinone oxidoreductase subunit I (163 aa).

2 4Fe-4S ferredoxin-type domains span residues 54 to 84 (LRRYPNGEERCIACKLCEAVCPALAITIDSA) and 94 to 123 (TRYDIDLFKCIFCGFCEESCPVDSIVETHI). The [4Fe-4S] cluster site is built by cysteine 64, cysteine 67, cysteine 70, cysteine 74, cysteine 103, cysteine 106, cysteine 109, and cysteine 113.

This sequence belongs to the complex I 23 kDa subunit family. In terms of assembly, NDH-1 is composed of 14 different subunits. Subunits NuoA, H, J, K, L, M, N constitute the membrane sector of the complex. Requires [4Fe-4S] cluster as cofactor.

The protein resides in the cell inner membrane. It carries out the reaction a quinone + NADH + 5 H(+)(in) = a quinol + NAD(+) + 4 H(+)(out). Its function is as follows. NDH-1 shuttles electrons from NADH, via FMN and iron-sulfur (Fe-S) centers, to quinones in the respiratory chain. The immediate electron acceptor for the enzyme in this species is believed to be ubiquinone. Couples the redox reaction to proton translocation (for every two electrons transferred, four hydrogen ions are translocated across the cytoplasmic membrane), and thus conserves the redox energy in a proton gradient. The polypeptide is NADH-quinone oxidoreductase subunit I (Xylella fastidiosa (strain 9a5c)).